We begin with the raw amino-acid sequence, 224 residues long: Putative homeobox protein R749 (224 aa).

Residues 139–162 form a disordered region; that stretch reads KTKTIKKSTSEKKTSPKKKTTSQQ. The homeobox DNA-binding region spans 161–220; sequence QQIKRVRLSDEERNILESQYSKNNFPSPEIRDELAKKIGKTPRQVQIWFQNKRCKDRKNL.

It is found in the host nucleus. This is Putative homeobox protein R749 from Acanthamoeba polyphaga mimivirus (APMV).